Reading from the N-terminus, the 773-residue chain is Pentatricopeptide repeat-containing protein At1g76280 (773 aa).

11 PPR repeats span residues 130–165, 166–200, 201–231, 235–269, 332–369, 370–400, 402–436, 524–558, 559–593, 594–628, and 629–663; these read DSRSLLFIVKSLCNGGHLDKASEFIHAVREDDRISP, LLPIYNFFLGACARTRSVYHASKCLELMDQRRVGK, NGITYVALLKLAVFQRNLSTVNDIWKHYVNH, DILSLRRFIWSFTRLGDLKSAYELLQHMVYLALRG, LRWSFNDVIHACGQSKNSELAEQLMLQLKVMQQQNLKP, YDSTLATVAAYCSKALQVDLAEHLLDQISEC, YSYPFNNLLAAYDSLDQPERAVRVLARMKELKLRP, GTPTYNIVLHSLLEANETDMVINIFKRMKSCGCPA, DVATYNIMIDCCSLIHSYKSACALVSMMIRDGFSP, KAVTFTALMKILLNDANFEEALNLLDQAALEEIHL, and DVLSYNTILRKAFEKGMIDVIEYIVEQMHREKVNP.

Belongs to the PPR family. P subfamily.

This is Pentatricopeptide repeat-containing protein At1g76280 from Arabidopsis thaliana (Mouse-ear cress).